The following is a 170-amino-acid chain: Mitotic-spindle organizing protein 2B (170 aa).

2 disordered regions span residues Met1–Ala26 and Ser102–Thr170. A compositionally biased stretch (low complexity) spans Gly8–Pro20. A compositionally biased stretch (polar residues) spans Pro123–Gly132. The segment covering Ser151–Thr170 has biased composition (low complexity).

It belongs to the MOZART2 family. As to quaternary structure, part of the gamma-tubulin complex. Interacts with TUBG1.

Its subcellular location is the cytoplasm. The protein resides in the cytoskeleton. It is found in the microtubule organizing center. It localises to the centrosome. The protein localises to the spindle. In Xenopus tropicalis (Western clawed frog), this protein is Mitotic-spindle organizing protein 2B (mzt2b).